Reading from the N-terminus, the 425-residue chain is Apolipoprotein N-acyltransferase (425 aa).

The next 6 membrane-spanning stretches (helical) occupy residues 12–32, 34–54, 60–80, 88–108, 120–140, and 142–162; these read LLAC…AYAI, NPYI…LAFL, SAFA…ALSF, LLPL…YLLL, FLGS…DSFF, and YSVF…CIFL. One can recognise a CN hydrolase domain in the interval 201-425; sequence VSTKTPQDLK…LGDILFRKRS (225 aa). Catalysis depends on Glu-242, which acts as the Proton acceptor. Lys-296 is an active-site residue. Catalysis depends on Cys-349, which acts as the Nucleophile.

The protein belongs to the CN hydrolase family. Apolipoprotein N-acyltransferase subfamily.

It localises to the cell inner membrane. The catalysed reaction is N-terminal S-1,2-diacyl-sn-glyceryl-L-cysteinyl-[lipoprotein] + a glycerophospholipid = N-acyl-S-1,2-diacyl-sn-glyceryl-L-cysteinyl-[lipoprotein] + a 2-acyl-sn-glycero-3-phospholipid + H(+). The protein operates within protein modification; lipoprotein biosynthesis (N-acyl transfer). Functionally, catalyzes the phospholipid dependent N-acylation of the N-terminal cysteine of apolipoprotein, the last step in lipoprotein maturation. The polypeptide is Apolipoprotein N-acyltransferase (Helicobacter pylori (strain ATCC 700392 / 26695) (Campylobacter pylori)).